The sequence spans 125 residues: Protein 5 (125 aa).

This is Protein 5 (5) from Hordeum vulgare (Barley).